We begin with the raw amino-acid sequence, 183 residues long: Porphobilinogen deaminase (183 aa).

The protein belongs to the HMBS family. As to quaternary structure, monomer. It depends on dipyrromethane as a cofactor.

The catalysed reaction is 4 porphobilinogen + H2O = hydroxymethylbilane + 4 NH4(+). The protein operates within porphyrin-containing compound metabolism; protoporphyrin-IX biosynthesis; coproporphyrinogen-III from 5-aminolevulinate: step 2/4. Functionally, tetrapolymerization of the monopyrrole PBG into the hydroxymethylbilane pre-uroporphyrinogen in several discrete steps. This is Porphobilinogen deaminase (hemC) from Yersinia intermedia.